A 967-amino-acid polypeptide reads, in one-letter code: MNNIKKDSQKDRPTYKDTLNLLQTNFGMRANATLREPELQAFWREKNIDFELGLNNSGETFTLHDGPPYANGTLHMGHALNKVLKDIINKFQTMKGKKVCYVPGWDCHGLPIELKVLQAMDKSQRAELTPIKLRKKAAAYAKKQVSQQMDGFKRWGVWGDWDQPYLSLDKKFEASQIKLFGEMVFKGYIYRGLKPVHWSPSSQTALAEAELEYPTGHTSKSIYVGFKVNQIPKRLTQEISKQAPDLINSEGKLKELKLVIWTTTPWTIPANEAISVNQKLEYVIAQSSDRSLIIIANDLLQEVSKSVGINYEKRVLIKGSILDGIIYKHPLFDKISPVVLGGDYITTESGTGLVHTAPGHGVDDFNTAKKYNLSISCPVDEKGFLTKEAGKFEGLNVLKDANSVIISDLINAGSLLKEIPYEHRYPYDWRTKKPTIFRATEQWFASVEGFRDKALSAIEDVIWLPESGKNRINSMVRERGDWCISRQRTWGVPIPVFYEKNGQEILLNKETISHIADLFSVHGADIWWEYEVSELLPPSYLNQADRWQKGTDTMDVWFDSGSSWSSVISKKENLNYPADLYLEGSDQHRGWFQSSLLTSVAVNEHAPFKKVLTHGFALDENGRKMSKSLGNIIDPLVIINGGSNKKLDPAYGADVLRLWVSSVDYSADVPIGSNILKQISDVYRKVRNTSRYLLGNLYDFDYKIDSIDIANLPLLDKWMLNRTAEVIDEISDAYNNFEFSKFFQTIQNFCVVDLSNFYLDIAKDRLYVSSKSDFRRRSCQTVLSLVIEKISGLIAPVLCHMAEDIWQNIPYDLEEASVFQRGWPNVPKSWKNSSFNCHVTELRKLRAVINRMLESCRNNQALGSSLEASVRVDISDEKVKAAIEWLAESESNNVDVLRDWFLVSSLQIGGEPWAEVLVSEDNDYASVEIAKARGFKCERCWHYEIEMSKNPQHTNICKRCEKVVLAI.

A 'HIGH' region motif is present at residues 68 to 78 (PYANGTLHMGH). L-isoleucyl-5'-AMP is bound at residue Glu583. The 'KMSKS' region motif lies at 624–628 (KMSKS). Lys627 contributes to the ATP binding site. Residues Cys937, Cys940, Cys957, and Cys960 each coordinate Zn(2+).

It belongs to the class-I aminoacyl-tRNA synthetase family. IleS type 1 subfamily. As to quaternary structure, monomer. Zn(2+) serves as cofactor.

It is found in the cytoplasm. It carries out the reaction tRNA(Ile) + L-isoleucine + ATP = L-isoleucyl-tRNA(Ile) + AMP + diphosphate. Functionally, catalyzes the attachment of isoleucine to tRNA(Ile). As IleRS can inadvertently accommodate and process structurally similar amino acids such as valine, to avoid such errors it has two additional distinct tRNA(Ile)-dependent editing activities. One activity is designated as 'pretransfer' editing and involves the hydrolysis of activated Val-AMP. The other activity is designated 'posttransfer' editing and involves deacylation of mischarged Val-tRNA(Ile). The sequence is that of Isoleucine--tRNA ligase from Prochlorococcus marinus (strain NATL2A).